The chain runs to 635 residues: Threonine--tRNA ligase (635 aa).

A TGS domain is found at 1 to 61 (MPIITLPDGN…EKDANIAIIT (61 aa)). The tract at residues 242 to 533 (DHRKIGKQLD…LTEEYAGVYP (292 aa)) is catalytic. Zn(2+) contacts are provided by C333, H384, and H510.

The protein belongs to the class-II aminoacyl-tRNA synthetase family. Homodimer. Requires Zn(2+) as cofactor.

The protein localises to the cytoplasm. It catalyses the reaction tRNA(Thr) + L-threonine + ATP = L-threonyl-tRNA(Thr) + AMP + diphosphate + H(+). In terms of biological role, catalyzes the attachment of threonine to tRNA(Thr) in a two-step reaction: L-threonine is first activated by ATP to form Thr-AMP and then transferred to the acceptor end of tRNA(Thr). Also edits incorrectly charged L-seryl-tRNA(Thr). In Psychromonas ingrahamii (strain DSM 17664 / CCUG 51855 / 37), this protein is Threonine--tRNA ligase.